The chain runs to 342 residues: Biotin synthase (342 aa).

The 225-residue stretch at 36–260 (NRIQISTLLS…MMPKSYIRLS (225 aa)) folds into the Radical SAM core domain. The [4Fe-4S] cluster site is built by Cys51, Cys55, and Cys58. The [2Fe-2S] cluster site is built by Cys95, Cys126, Cys186, and Arg258.

The protein belongs to the radical SAM superfamily. Biotin synthase family. In terms of assembly, homodimer. The cofactor is [4Fe-4S] cluster. It depends on [2Fe-2S] cluster as a cofactor.

The enzyme catalyses (4R,5S)-dethiobiotin + (sulfur carrier)-SH + 2 reduced [2Fe-2S]-[ferredoxin] + 2 S-adenosyl-L-methionine = (sulfur carrier)-H + biotin + 2 5'-deoxyadenosine + 2 L-methionine + 2 oxidized [2Fe-2S]-[ferredoxin]. It participates in cofactor biosynthesis; biotin biosynthesis; biotin from 7,8-diaminononanoate: step 2/2. In terms of biological role, catalyzes the conversion of dethiobiotin (DTB) to biotin by the insertion of a sulfur atom into dethiobiotin via a radical-based mechanism. The polypeptide is Biotin synthase (Buchnera aphidicola subsp. Schizaphis graminum (strain Sg)).